The sequence spans 70 residues: MPVKKGEMVRAIREKLENSVEATASDTRFPAYLFETKGEVVDIKGDYALVMFGQVPTPNIWLRLDQIESF.

The protein belongs to the complex I NdhO subunit family. NDH-1 can be composed of about 15 different subunits; different subcomplexes with different compositions have been identified which probably have different functions.

The protein resides in the cellular thylakoid membrane. The catalysed reaction is a plastoquinone + NADH + (n+1) H(+)(in) = a plastoquinol + NAD(+) + n H(+)(out). It carries out the reaction a plastoquinone + NADPH + (n+1) H(+)(in) = a plastoquinol + NADP(+) + n H(+)(out). In terms of biological role, NDH-1 shuttles electrons from an unknown electron donor, via FMN and iron-sulfur (Fe-S) centers, to quinones in the respiratory and/or the photosynthetic chain. The immediate electron acceptor for the enzyme in this species is believed to be plastoquinone. Couples the redox reaction to proton translocation, and thus conserves the redox energy in a proton gradient. Cyanobacterial NDH-1 also plays a role in inorganic carbon-concentration. This Trichormus variabilis (strain ATCC 29413 / PCC 7937) (Anabaena variabilis) protein is NAD(P)H-quinone oxidoreductase subunit O.